Here is a 344-residue protein sequence, read N- to C-terminus: MKLRIGVIGTGAIGKEHINRITNKLAGGEIVAVTDVNQEAAQQVVTDYSLNAKVYPDDDSLIAAENVDAVLVTSWGPAHESSVLKAIKANKFVFCEKPLATTAEGCMRIVNEEVKAGKRLVQVGFMRRYDSGYVQLKEAIDNRVIGEPLMIHCAHRNPVVGDNYTTDMAVVDTLVHEIDALHWLINDDYESVQVIYPKKSKNALPHLRDPQIVIIETKGGVVINAEIYVNCKYGYDIQCEIVGEDGIVKLPEPSSISLRKDGKFSTDILMDWQRRFVDAYDVEIQDFIDSIQQKGEVSGPTAWDGYIAAVTTDACVKAQESGQKEPVALQEKPEFYQTFTTVKK.

It belongs to the Gfo/Idh/MocA family. Homotetramer.

The enzyme catalyses myo-inositol + NAD(+) = scyllo-inosose + NADH + H(+). It carries out the reaction 1D-chiro-inositol + NAD(+) = scyllo-inosine + NADH + H(+). The protein operates within polyol metabolism; myo-inositol degradation into acetyl-CoA; acetyl-CoA from myo-inositol: step 1/7. Involved in the oxidation of myo-inositol (MI) and D-chiro-inositol (DCI) to 2-keto-myo-inositol (2KMI or 2-inosose) and 1-keto-D-chiro-inositol (1KDCI), respectively. In Bacillus licheniformis (strain ATCC 14580 / DSM 13 / JCM 2505 / CCUG 7422 / NBRC 12200 / NCIMB 9375 / NCTC 10341 / NRRL NRS-1264 / Gibson 46), this protein is Inositol 2-dehydrogenase/D-chiro-inositol 3-dehydrogenase.